Here is a 439-residue protein sequence, read N- to C-terminus: Xaa-Pro dipeptidase (439 aa).

Mn(2+) is bound by residues D244, D255, H335, E380, and E419.

The protein belongs to the peptidase M24B family. Bacterial-type prolidase subfamily. It depends on Mn(2+) as a cofactor.

It catalyses the reaction Xaa-L-Pro dipeptide + H2O = an L-alpha-amino acid + L-proline. In terms of biological role, splits dipeptides with a prolyl residue in the C-terminal position. The protein is Xaa-Pro dipeptidase of Shewanella sediminis (strain HAW-EB3).